The primary structure comprises 659 residues: Cysteine-rich receptor-like protein kinase 7 (659 aa).

The N-terminal stretch at 1-23 (MSSLFPFIFLFLFSFLTSFRASA) is a signal peptide. Residues 24–273 (QDPRFLAYYC…SLSDKSGNSN (250 aa)) are Extracellular-facing. 2 Gnk2-homologous domains span residues 27 to 131 (RFLA…HKNI) and 142 to 244 (FILR…LYDF). N-linked (GlcNAc...) asparagine glycosylation is found at Asn35, Asn42, Asn60, Asn69, and Asn103. Asn246 carries N-linked (GlcNAc...) asparagine glycosylation. Residues 274–294 (VVVVAVVVPIIVAVLIFIAGY) traverse the membrane as a helical segment. Topologically, residues 295–659 (CFFAKRAKKT…DKSMSDLDPR (365 aa)) are cytoplasmic. The Protein kinase domain occupies 336 to 622 (FSENNKIGRG…ALPAPQQPGF (287 aa)). ATP-binding positions include 342–350 (IGRGGFGDV) and Lys364. A Phosphotyrosine modification is found at Tyr409. The active-site Proton acceptor is the Asp461. Phosphoserine is present on Ser465. Residue Thr501 is modified to Phosphothreonine. Phosphotyrosine is present on Tyr509. The tract at residues 626–659 (SRPGTNRLDSDQSTTNKSVTVSIDDKSMSDLDPR) is disordered. Residues 636–646 (DQSTTNKSVTV) are compositionally biased toward polar residues. Residues 648-659 (IDDKSMSDLDPR) show a composition bias toward basic and acidic residues.

This sequence belongs to the protein kinase superfamily. Ser/Thr protein kinase family. CRK subfamily.

It localises to the membrane. The enzyme catalyses L-seryl-[protein] + ATP = O-phospho-L-seryl-[protein] + ADP + H(+). The catalysed reaction is L-threonyl-[protein] + ATP = O-phospho-L-threonyl-[protein] + ADP + H(+). This chain is Cysteine-rich receptor-like protein kinase 7 (CRK7), found in Arabidopsis thaliana (Mouse-ear cress).